We begin with the raw amino-acid sequence, 352 residues long: Inner membrane protein YeeA (352 aa).

Residues 1 to 25 (MRADKSLSPFEIRVYRHYRIVHGTR) are Cytoplasmic-facing. A run of 2 helical transmembrane segments spans residues 26 to 46 (VALA…PEST) and 47 to 67 (WPLV…NVVP). Position 68 (R68) is a topological domain, cytoplasmic. Residues 69 to 89 (AFERIGGTVLGSILGLIALQL) form a helical membrane-spanning segment. Residue E90 is a topological domain, periplasmic. Residues 91–111 (LISLPLMLVWCAAAMFLCGWL) traverse the membrane as a helical segment. At 112–117 (ALGKKP) the chain is on the cytoplasmic side. Residues 118 to 138 (YQGLLIGVTLAIVVGSPTGEI) form a helical membrane-spanning segment. Over 139–147 (DTALWRSGD) the chain is Periplasmic. A helical transmembrane segment spans residues 148-168 (VILGSLLAMLFTGIWPQRAFI). At 169-352 (HWRIQLAKSL…SNLICRALRK (184 aa)) the chain is on the cytoplasmic side.

The protein localises to the cell inner membrane. In Escherichia coli (strain K12), this protein is Inner membrane protein YeeA (yeeA).